The chain runs to 346 residues: DNA ligase (346 aa).

Residues 32 to 35, arginine 39, 55 to 57, glutamate 93, glutamate 142, and arginine 149 each bind ATP; these read DCKY and RVS. Catalysis depends on lysine 34, which acts as the N6-AMP-lysine intermediate. Glutamate 223 serves as a coordination point for a divalent metal cation. Residues lysine 238 and lysine 244 each coordinate ATP.

It belongs to the ATP-dependent DNA ligase family. A divalent metal cation is required as a cofactor.

It carries out the reaction ATP + (deoxyribonucleotide)n-3'-hydroxyl + 5'-phospho-(deoxyribonucleotide)m = (deoxyribonucleotide)n+m + AMP + diphosphate.. In terms of biological role, DNA ligase, which is expressed in the early stage of lytic development, has been implicated in T7 DNA synthesis and genetic recombination. It may also play a role in T7 DNA repair. In Enterobacteria phage T3 (Bacteriophage T3), this protein is DNA ligase (1.3).